Consider the following 335-residue polypeptide: uncharacterized protein (335 aa).

This is an uncharacterized protein from Methanocaldococcus jannaschii (strain ATCC 43067 / DSM 2661 / JAL-1 / JCM 10045 / NBRC 100440) (Methanococcus jannaschii).